The chain runs to 528 residues: MAEHLELLAEMPMVGRMSTQERLKHAQKRRAQQVKMWAQAEKEAQGKKGPGERPRKEAASQGLLKQVLFPPSVVLLEAAARNDLEEVRQFLGSGVSPDLANEDGLTALHQCCIDDFREMVQQLLEAGANINACDSECWTPLHAAATCGHLHLVELLIASGANLLAVNTDGNMPYDLCDDEQTLDCLETAMADRGITQDSIEAARAVPELRMLDDIRSRLQAGADLHAPLDHGATLLHVAAANGFSEAAALLLEHRASLSAKDQDGWEPLHAAAYWGQVPLVELLVAHGADLNAKSLMDETPLDVCGDEEVRAKLLELKHKHDALLRAQSRQRSLLRRRTSSAGSRGKVVRRVSLTQRTDLYRKQHAQEAIVWQQPPPTSPEPPEDNDDRQTGAELRPPPPEEDNPEVVRPHNGRVGGSPVRHLYSKRLDRSVSYQLSPLDSTTPHTLVHDKAHHTLADLKRQRAAAKLQRPPPEGPESPETAEPGLPGDTVTPQPDCGFRAGGDPPLLKLTAPAVEAPVERRPCCLLM.

Residues 18–45 (STQERLKHAQKRRAQQVKMWAQAEKEAQ) are a coiled coil. The segment at 19–59 (TQERLKHAQKRRAQQVKMWAQAEKEAQGKKGPGERPRKEAA) is disordered. A compositionally biased stretch (basic and acidic residues) spans 40–58 (AEKEAQGKKGPGERPRKEA). 5 ANK repeats span residues 70 to 99 (PPSV…SPDL), 103 to 132 (DGLT…NINA), 136 to 165 (ECWT…NLLA), 231 to 260 (HGAT…SLSA), and 264 to 293 (DGWE…DLNA). Disordered stretches follow at residues 330–351 (RQRS…VVRR) and 367–421 (QEAI…SPVR). Serine 433 is subject to Phosphoserine. The tract at residues 462–505 (QRAAAKLQRPPPEGPESPETAEPGLPGDTVTPQPDCGFRAGGDP) is disordered. Residue cysteine 524 is the site of S-palmitoyl cysteine attachment. Cysteine 525 is subject to Cysteine methyl ester. Cysteine 525 carries S-farnesyl cysteine lipidation. Positions 526 to 528 (LLM) are cleaved as a propeptide — removed in mature form.

In terms of assembly, binds PP1.

Its subcellular location is the cell membrane. Its function is as follows. Inhibits protein phosphatase 1 activity toward phosphorylase, myosin light chain and myosin substrates. The sequence is that of Protein phosphatase 1 regulatory subunit 16A (PPP1R16A) from Homo sapiens (Human).